The sequence spans 86 residues: Large ribosomal subunit protein bL27 (86 aa).

The interval 1–21 (MAHHKGGGSSRNGKDSNPQYL) is disordered.

It belongs to the bacterial ribosomal protein bL27 family.

The protein is Large ribosomal subunit protein bL27 of Coprothermobacter proteolyticus (strain ATCC 35245 / DSM 5265 / OCM 4 / BT).